The chain runs to 440 residues: Transposon Ty1-BR Gag polyprotein (440 aa).

Composition is skewed to polar residues over residues 1–10 (MESQQLSNYP), 48–60 (TKAN…TPAS), and 127–152 (QSQF…GNTF). 3 disordered regions span residues 1-93 (MESQ…MMTQ), 126-173 (PQSQ…RPPP), and 352-440 (GSRN…PETY). Residues 153-165 (TDSSSADSDMTST) are compositionally biased toward low complexity. The interval 299–401 (NNGIHINNKV…NSKSKTARAH (103 aa)) is RNA-binding. Over residues 402–418 (NVSTSNNSPSTDNDSIS) the composition is skewed to low complexity. Serine 416 is subject to Phosphoserine. Residues 419–428 (KSTTEPIQLN) are compositionally biased toward polar residues. A compositionally biased stretch (basic and acidic residues) spans 429-440 (NKHDLHLRPETY).

Homotrimer.

The protein resides in the cytoplasm. In terms of biological role, capsid protein (CA) is the structural component of the virus-like particle (VLP), forming the shell that encapsulates the retrotransposons dimeric RNA genome. The particles are assembled from trimer-clustered units and there are holes in the capsid shells that allow for the diffusion of macromolecules. CA also has nucleocapsid-like chaperone activity, promoting primer tRNA(i)-Met annealing to the multipartite primer-binding site (PBS), dimerization of Ty1 RNA and initiation of reverse transcription. The sequence is that of Transposon Ty1-BR Gag polyprotein (TY1A-BR) from Saccharomyces cerevisiae (strain ATCC 204508 / S288c) (Baker's yeast).